Reading from the N-terminus, the 60-residue chain is Large ribosomal subunit protein bL32 (60 aa).

Belongs to the bacterial ribosomal protein bL32 family.

This is Large ribosomal subunit protein bL32 from Desulfovibrio desulfuricans (strain ATCC 27774 / DSM 6949 / MB).